The sequence spans 85 residues: Large ribosomal subunit protein bL27 (85 aa).

Residues 1–21 (MAHKKAGGSTRNGRDSRGKRL) form a disordered region.

Belongs to the bacterial ribosomal protein bL27 family.

In Blochmanniella floridana, this protein is Large ribosomal subunit protein bL27.